A 427-amino-acid chain; its full sequence is Sensor histidine kinase ArsS (427 aa).

2 consecutive transmembrane segments (helical) span residues 3-23 (FSIF…FGAF) and 131-151 (NYFL…LFVL). The HAMP domain maps to 151 to 203 (LQSLLPLRELRSQVKPFAQGDKSVSCKSKQKDEIGDLANEFDNCILKINAMNE). Residues 211-398 (SIMHELRTPI…LSYHYSNGRI (188 aa)) enclose the Histidine kinase domain. At H214 the chain carries Phosphohistidine; by autocatalysis.

Autophosphorylated.

Its subcellular location is the membrane. It carries out the reaction ATP + protein L-histidine = ADP + protein N-phospho-L-histidine.. Functionally, member of the two-component regulatory system ArsS/ArsR that regulates genes involved in biofilm formation and acid adaptation by acting on major ammonia-producing pathways. Functions as a sensor protein kinase which is autophosphorylated at a histidine residue and transfers its phosphate group to the conserved aspartic acid residue in the regulatory domain of ArsR. In turn, ArsR binds to the upstream promoter regions of target genes including ureA, amiE and amiF to positively regulate their expression in response to acidic pH. Also participates in acidic acclimatation in a phosphorylation-independent pathway by regulating acid-induced trafficking of urease and its accessory proteins to the inner membrane. This is Sensor histidine kinase ArsS from Helicobacter pylori (strain ATCC 700392 / 26695) (Campylobacter pylori).